We begin with the raw amino-acid sequence, 519 residues long: Bifunctional purine biosynthesis protein PurH (519 aa).

The region spanning 1–147 is the MGS-like domain; it reads MAKITRALIS…KNNHDVTVLV (147 aa).

Belongs to the PurH family.

The enzyme catalyses (6R)-10-formyltetrahydrofolate + 5-amino-1-(5-phospho-beta-D-ribosyl)imidazole-4-carboxamide = 5-formamido-1-(5-phospho-D-ribosyl)imidazole-4-carboxamide + (6S)-5,6,7,8-tetrahydrofolate. It catalyses the reaction IMP + H2O = 5-formamido-1-(5-phospho-D-ribosyl)imidazole-4-carboxamide. Its pathway is purine metabolism; IMP biosynthesis via de novo pathway; 5-formamido-1-(5-phospho-D-ribosyl)imidazole-4-carboxamide from 5-amino-1-(5-phospho-D-ribosyl)imidazole-4-carboxamide (10-formyl THF route): step 1/1. It functions in the pathway purine metabolism; IMP biosynthesis via de novo pathway; IMP from 5-formamido-1-(5-phospho-D-ribosyl)imidazole-4-carboxamide: step 1/1. This chain is Bifunctional purine biosynthesis protein PurH, found in Trichlorobacter lovleyi (strain ATCC BAA-1151 / DSM 17278 / SZ) (Geobacter lovleyi).